We begin with the raw amino-acid sequence, 335 residues long: Karyogamy protein KAR4 (335 aa).

The segment at 1–25 is disordered; the sequence is MAFQDPTYDQNKSRHINNSHLQGPN. A compositionally biased stretch (polar residues) spans 16–25; it reads INNSHLQGPN.

The protein belongs to the MT-A70-like family. As to quaternary structure, component of the MIS (mRNA N6-methyladenosine (m6A) methylation) complex, at least composed of IME4, KAR4, MUM2, SLZ1, and VIR1. Interacts with VIR1.

The protein resides in the nucleus. Its subcellular location is the cytoplasm. Component of the MIS complex, a complex that mediates N6-methyladenosine (m6A) methylation of meiotic mRNAs and is required for initiation of meiosis, progression through the meiotic divisions and sporulation. May assist STE12 in the pheromone-dependent expression of KAR3 and CIK1. The chain is Karyogamy protein KAR4 (KAR4) from Saccharomyces cerevisiae (strain ATCC 204508 / S288c) (Baker's yeast).